The primary structure comprises 351 residues: Histidinol-phosphate aminotransferase 1 (351 aa).

The residue at position 210 (lysine 210) is an N6-(pyridoxal phosphate)lysine.

Belongs to the class-II pyridoxal-phosphate-dependent aminotransferase family. Histidinol-phosphate aminotransferase subfamily. As to quaternary structure, homodimer. Pyridoxal 5'-phosphate is required as a cofactor.

The catalysed reaction is L-histidinol phosphate + 2-oxoglutarate = 3-(imidazol-4-yl)-2-oxopropyl phosphate + L-glutamate. The protein operates within amino-acid biosynthesis; L-histidine biosynthesis; L-histidine from 5-phospho-alpha-D-ribose 1-diphosphate: step 7/9. In Pseudomonas aeruginosa (strain ATCC 15692 / DSM 22644 / CIP 104116 / JCM 14847 / LMG 12228 / 1C / PRS 101 / PAO1), this protein is Histidinol-phosphate aminotransferase 1 (hisC1).